We begin with the raw amino-acid sequence, 139 residues long: D-ribose pyranase (139 aa).

The active-site Proton donor is the His20. Substrate-binding positions include Asp28, His106, and 128 to 130 (YAN).

This sequence belongs to the RbsD / FucU family. RbsD subfamily. As to quaternary structure, homodecamer.

The protein resides in the cytoplasm. The enzyme catalyses beta-D-ribopyranose = beta-D-ribofuranose. The protein operates within carbohydrate metabolism; D-ribose degradation; D-ribose 5-phosphate from beta-D-ribopyranose: step 1/2. Its function is as follows. Catalyzes the interconversion of beta-pyran and beta-furan forms of D-ribose. The protein is D-ribose pyranase of Histophilus somni (strain 129Pt) (Haemophilus somnus).